The following is a 277-amino-acid chain: Small ribosomal subunit protein uS2 (277 aa).

Basic and acidic residues predominate over residues 228–241; the sequence is YEERLQAETDKDAE. Residues 228-277 form a disordered region; that stretch reads YEERLQAETDKDAESSTVQQEENPEADIPESIETKESVSAAADSDLDENE.

Belongs to the universal ribosomal protein uS2 family.

The sequence is that of Small ribosomal subunit protein uS2 from Syntrophus aciditrophicus (strain SB).